Here is a 2202-residue protein sequence, read N- to C-terminus: Nonribosomal peptide synthetase 5 (2202 aa).

The segment at 58–443 is adenylation 1; the sequence is TYAQLDALSD…LLSYDKVDSA (386 aa). Residues 517 to 593 form the Carrier 1 domain; the sequence is ERGLGAVESV…NIAAAVVELS (77 aa). Serine 554 carries the post-translational modification O-(pantetheine 4'-phosphoryl)serine. A condensation 1 region spans residues 625 to 918; that stretch reads IAPMTDMQTR…INTLPLAINT (294 aa). Residues 1105–1482 form an adenylation 2 region; that stretch reads TYREFGRMTE…EVQSTISKLA (378 aa). Positions 1563-1643 constitute a Carrier 2 domain; the sequence is DLETDTQRVL…DLSLAIDELV (81 aa). Serine 1602 is subject to O-(pantetheine 4'-phosphoryl)serine. Residues 1664 to 1952 form a condensation 2 region; sequence GQLPLSYLEK…FLDRLLLRIQ (289 aa). The segment at 2103 to 2129 is disordered; sequence PVGLTPSHEGSAELTNGTNKTDSTTGQ. A compositionally biased stretch (polar residues) spans 2115–2129; it reads ELTNGTNKTDSTTGQ. Residues 2130–2202 enclose the Carrier 3 domain; the sequence is QELENNLTDV…LELATCAVII (73 aa). At serine 2164 the chain carries O-(pantetheine 4'-phosphoryl)serine.

This sequence belongs to the NRP synthetase family.

In terms of biological role, nonribosomal peptide synthesis (NRPS) is a key mechanism responsible for the biosynthesis of bioactive metabolites which are potentially contributing to organismal virulence. This Aspergillus fumigatus (strain ATCC MYA-4609 / CBS 101355 / FGSC A1100 / Af293) (Neosartorya fumigata) protein is Nonribosomal peptide synthetase 5 (NRPS5).